The sequence spans 142 residues: Large ribosomal subunit protein uL13 (142 aa).

It belongs to the universal ribosomal protein uL13 family. In terms of assembly, part of the 50S ribosomal subunit.

Functionally, this protein is one of the early assembly proteins of the 50S ribosomal subunit, although it is not seen to bind rRNA by itself. It is important during the early stages of 50S assembly. This Acholeplasma laidlawii (strain PG-8A) protein is Large ribosomal subunit protein uL13.